Reading from the N-terminus, the 361-residue chain is S-adenosylmethionine-dependent nucleotide dehydratase RSAD2 (361 aa).

Residues 69–289 enclose the Radical SAM core domain; it reads PTTPTSVNYH…LERHKEVSCL (221 aa). Residues cysteine 83, cysteine 87, and cysteine 90 each contribute to the [4Fe-4S] cluster site. Lysine 197 carries the N6-acetyllysine modification. Residue lysine 206 forms a Glycyl lysine isopeptide (Lys-Gly) (interchain with G-Cter in ubiquitin) linkage.

It belongs to the radical SAM superfamily. RSAD2 family. As to quaternary structure, homodimer. Interacts with IRAK1 and TRAF6. Interacts with FPPS. Interacts with HADHB. Interacts (via C-terminus) with VAPA/VAP33 (via C-terminus). (Microbial infection) Interacts with human cytomegalovirus/HHV-5 protein vMIA/UL37; this interaction results in RSAD2/viperin relocalization from the endoplasmic reticulum to the mitochondria. In terms of assembly, (Microbial infection) Interacts (via N-terminus) with enterovirus A71 protein 2C; this interaction inhibits viral replication. As to quaternary structure, (Microbial infection) Interacts with herpes simplex virus 1/HHV-1 glycoprotein D; this interaction inhibits HHV-1 replication by facilitating IRF7-mediated IFN-beta production. The cofactor is [4Fe-4S] cluster. In terms of processing, acetylated by HAT1. HAT1-mediated acetylation of Lys-197 in turn recruits UBE4A that stimulates RSAD2 polyubiquitination leading to proteasomal degradation. Post-translationally, 'Lys-6'-linked polyubiquitination at Lys-206 leads to RSAD2 protein degradation.

Its subcellular location is the endoplasmic reticulum membrane. The protein resides in the golgi apparatus. It is found in the endoplasmic reticulum. It localises to the lipid droplet. The protein localises to the mitochondrion. Its subcellular location is the mitochondrion inner membrane. The protein resides in the mitochondrion outer membrane. The enzyme catalyses CTP + AH2 + S-adenosyl-L-methionine = 3'-deoxy-3',4'-didehydro-CTP + 5'-deoxyadenosine + L-methionine + A + H2O + H(+). With respect to regulation, IRAK1 and TRAF6 synergistically activate RSAD2 increasing its activity with CTP as substrate about 10-fold. Interferon-inducible antiviral protein which plays a major role in the cell antiviral state induced by type I and type II interferon. Catalyzes the conversion of cytidine triphosphate (CTP) to 3'-deoxy-3',4'-didehydro-CTP (ddhCTP) via a SAM-dependent radical mechanism. In turn, ddhCTP acts as a chain terminator for the RNA-dependent RNA polymerases from multiple viruses and directly inhibits viral replication. Therefore, inhibits a wide range of DNA and RNA viruses, including human cytomegalovirus (HCMV), hepatitis C virus (HCV), west Nile virus (WNV), dengue virus, sindbis virus, influenza A virus, sendai virus, vesicular stomatitis virus (VSV), zika virus, and human immunodeficiency virus (HIV-1). Also promotes TLR7 and TLR9-dependent production of IFN-beta production in plasmacytoid dendritic cells (pDCs) by facilitating 'Lys-63'-linked ubiquitination of IRAK1 by TRAF6. Plays a role in CD4+ T-cells activation and differentiation. Facilitates T-cell receptor (TCR)-mediated GATA3 activation and optimal T-helper 2 (Th2) cytokine production by modulating NFKB1 and JUNB activities. Can inhibit secretion of soluble proteins. This chain is S-adenosylmethionine-dependent nucleotide dehydratase RSAD2, found in Homo sapiens (Human).